Consider the following 85-residue polypeptide: Small ribosomal subunit protein uS17 (85 aa).

This sequence belongs to the universal ribosomal protein uS17 family. In terms of assembly, part of the 30S ribosomal subunit.

Functionally, one of the primary rRNA binding proteins, it binds specifically to the 5'-end of 16S ribosomal RNA. In Acetivibrio thermocellus (strain ATCC 27405 / DSM 1237 / JCM 9322 / NBRC 103400 / NCIMB 10682 / NRRL B-4536 / VPI 7372) (Clostridium thermocellum), this protein is Small ribosomal subunit protein uS17.